Here is a 163-residue protein sequence, read N- to C-terminus: uncharacterized protein (163 aa).

4Fe-4S ferredoxin-type domains follow at residues 30–59 (REIIVKEDKCISCGKCIEICPVNAITYSSD), 61–90 (LYITINKEKCVFCGKCKKVCPTNAIVIIRL), 105–136 (KYEFIDYISERCASCLVCLRNCPFNAIEEYGS), and 136–163 (SKIRIDINKCELCGKCEEICPLNAIILR). Residues Cys-39, Cys-42, Cys-45, Cys-49, Cys-70, Cys-73, Cys-76, Cys-80, Cys-116, Cys-119, Cys-122, Cys-126, Cys-145, Cys-148, Cys-151, and Cys-155 each coordinate [4Fe-4S] cluster.

This is an uncharacterized protein from Methanocaldococcus jannaschii (strain ATCC 43067 / DSM 2661 / JAL-1 / JCM 10045 / NBRC 100440) (Methanococcus jannaschii).